The primary structure comprises 330 residues: Aspartate--ammonia ligase (330 aa).

This sequence belongs to the class-II aminoacyl-tRNA synthetase family. AsnA subfamily.

Its subcellular location is the cytoplasm. The catalysed reaction is L-aspartate + NH4(+) + ATP = L-asparagine + AMP + diphosphate + H(+). The protein operates within amino-acid biosynthesis; L-asparagine biosynthesis; L-asparagine from L-aspartate (ammonia route): step 1/1. The polypeptide is Aspartate--ammonia ligase (Shigella flexneri serotype 5b (strain 8401)).